The sequence spans 325 residues: GMP reductase (325 aa).

Residue cysteine 174 is the Thioimidate intermediate of the active site. 203–226 (IVADGGIRNNGDIAKSIRFGASMC) is a binding site for NADP(+).

The protein belongs to the IMPDH/GMPR family. GuaC type 2 subfamily.

The enzyme catalyses IMP + NH4(+) + NADP(+) = GMP + NADPH + 2 H(+). In terms of biological role, catalyzes the irreversible NADPH-dependent deamination of GMP to IMP. It functions in the conversion of nucleobase, nucleoside and nucleotide derivatives of G to A nucleotides, and in maintaining the intracellular balance of A and G nucleotides. This chain is GMP reductase, found in Ligilactobacillus salivarius (strain UCC118) (Lactobacillus salivarius).